Reading from the N-terminus, the 487-residue chain is MERWWFNSILFKKEFEHRCGLSKSTGSLGPIENTSESEDPNINDMKKNIHSWGGRDNSNYSNVDHLFGVKDIRNFISDETFLVRDSNGNSYSIYFDIENHIFEIDNGHSFQSELESSFYSYQNSSYRNNGSNSDDPHYDHYMYDTQYSWNNNINSCIDNYLQSQIFIETDIVSGSDNYSNSYIYSSICGEIAGSGIRTRTDGSDLTIRESSNDLDVTQKYRHLWVQCENCYGLNYKKSFKSKMNLCEQCGYHLKMSSSDRIELLIDPGTWDPMDEDMVSLDPIEFHSEEEPYKDRVDSYQRKTGLTEAVQTGIGQLNSIPVAIGVMDFQFMGGSMGSVVGEKITRLIEYATKKFLPLIIVCASGGARMQEGSLSLMQMAKISSALYDYQSNKKLFYVPILTSPTTGGVTASFGMLGDIIIAEPNAYIAFAGKRVIEQTLNKTVPEGSQAAEYLFQKGLFDLIVPRNPLKSVLSELFQLHAFFPLNQN.

The region spanning 223–487 (LWVQCENCYG…LHAFFPLNQN (265 aa)) is the CoA carboxyltransferase N-terminal domain. Zn(2+) is bound by residues Cys227, Cys230, Cys246, and Cys249. The segment at 227–249 (CENCYGLNYKKSFKSKMNLCEQC) adopts a C4-type zinc-finger fold.

The protein belongs to the AccD/PCCB family. As to quaternary structure, acetyl-CoA carboxylase is a heterohexamer composed of biotin carboxyl carrier protein, biotin carboxylase and 2 subunits each of ACCase subunit alpha and ACCase plastid-coded subunit beta (accD). Zn(2+) serves as cofactor.

It localises to the plastid. Its subcellular location is the chloroplast stroma. The catalysed reaction is N(6)-carboxybiotinyl-L-lysyl-[protein] + acetyl-CoA = N(6)-biotinyl-L-lysyl-[protein] + malonyl-CoA. It functions in the pathway lipid metabolism; malonyl-CoA biosynthesis; malonyl-CoA from acetyl-CoA: step 1/1. Its function is as follows. Component of the acetyl coenzyme A carboxylase (ACC) complex. Biotin carboxylase (BC) catalyzes the carboxylation of biotin on its carrier protein (BCCP) and then the CO(2) group is transferred by the transcarboxylase to acetyl-CoA to form malonyl-CoA. This chain is Acetyl-coenzyme A carboxylase carboxyl transferase subunit beta, chloroplastic, found in Panax ginseng (Korean ginseng).